The sequence spans 704 residues: Elongation factor G (704 aa).

One can recognise a tr-type G domain in the interval 10–290 (KKVRNIGIMA…AVVDYLPSPL (281 aa)). GTP-binding positions include 19–26 (AHIDAGKT), 83–87 (DTPGH), and 137–140 (NKMD).

Belongs to the TRAFAC class translation factor GTPase superfamily. Classic translation factor GTPase family. EF-G/EF-2 subfamily.

It is found in the cytoplasm. In terms of biological role, catalyzes the GTP-dependent ribosomal translocation step during translation elongation. During this step, the ribosome changes from the pre-translocational (PRE) to the post-translocational (POST) state as the newly formed A-site-bound peptidyl-tRNA and P-site-bound deacylated tRNA move to the P and E sites, respectively. Catalyzes the coordinated movement of the two tRNA molecules, the mRNA and conformational changes in the ribosome. In Kocuria rhizophila (strain ATCC 9341 / DSM 348 / NBRC 103217 / DC2201), this protein is Elongation factor G.